The following is a 249-amino-acid chain: Cyclin-dependent kinase inhibitor 2 (249 aa).

Residues 118 to 180 are disordered; it reads KVCTQAGEDH…MCRRSSTTSA (63 aa). Over residues 161-180 the composition is skewed to polar residues; the sequence is AESNQEAKQQMCRRSSTTSA.

Belongs to the CDI family. ICK/KRP subfamily.

The polypeptide is Cyclin-dependent kinase inhibitor 2 (KRP2) (Oryza sativa subsp. japonica (Rice)).